A 178-amino-acid chain; its full sequence is SsrA-binding protein (178 aa).

Residues 1–28 (MAKKSTPVDSGRSKGKKASAPRGGGPAV) form a disordered region.

This sequence belongs to the SmpB family.

Its subcellular location is the cytoplasm. Required for rescue of stalled ribosomes mediated by trans-translation. Binds to transfer-messenger RNA (tmRNA), required for stable association of tmRNA with ribosomes. tmRNA and SmpB together mimic tRNA shape, replacing the anticodon stem-loop with SmpB. tmRNA is encoded by the ssrA gene; the 2 termini fold to resemble tRNA(Ala) and it encodes a 'tag peptide', a short internal open reading frame. During trans-translation Ala-aminoacylated tmRNA acts like a tRNA, entering the A-site of stalled ribosomes, displacing the stalled mRNA. The ribosome then switches to translate the ORF on the tmRNA; the nascent peptide is terminated with the 'tag peptide' encoded by the tmRNA and targeted for degradation. The ribosome is freed to recommence translation, which seems to be the essential function of trans-translation. The sequence is that of SsrA-binding protein from Corynebacterium urealyticum (strain ATCC 43042 / DSM 7109).